We begin with the raw amino-acid sequence, 886 residues long: Alanine--tRNA ligase (886 aa).

Zn(2+)-binding residues include His-564, His-568, Cys-676, and His-680.

The protein belongs to the class-II aminoacyl-tRNA synthetase family. It depends on Zn(2+) as a cofactor.

It localises to the cytoplasm. It catalyses the reaction tRNA(Ala) + L-alanine + ATP = L-alanyl-tRNA(Ala) + AMP + diphosphate. Functionally, catalyzes the attachment of alanine to tRNA(Ala) in a two-step reaction: alanine is first activated by ATP to form Ala-AMP and then transferred to the acceptor end of tRNA(Ala). Also edits incorrectly charged Ser-tRNA(Ala) and Gly-tRNA(Ala) via its editing domain. In Bartonella bacilliformis (strain ATCC 35685 / KC583 / Herrer 020/F12,63), this protein is Alanine--tRNA ligase.